The sequence spans 475 residues: UDP-N-acetylmuramate--L-alanine ligase (475 aa).

ATP is bound at residue 125 to 131; sequence GTHGKTT.

This sequence belongs to the MurCDEF family.

It localises to the cytoplasm. The enzyme catalyses UDP-N-acetyl-alpha-D-muramate + L-alanine + ATP = UDP-N-acetyl-alpha-D-muramoyl-L-alanine + ADP + phosphate + H(+). It participates in cell wall biogenesis; peptidoglycan biosynthesis. In terms of biological role, cell wall formation. In Actinobacillus pleuropneumoniae serotype 7 (strain AP76), this protein is UDP-N-acetylmuramate--L-alanine ligase.